We begin with the raw amino-acid sequence, 245 residues long: Small ribosomal subunit protein uS2 (245 aa).

This sequence belongs to the universal ribosomal protein uS2 family.

The sequence is that of Small ribosomal subunit protein uS2 from Pseudomonas putida (strain W619).